The sequence spans 353 residues: Heterogeneous nuclear ribonucleoproteins A2/B1 (353 aa).

Met-1 bears the N-acetylmethionine mark. Thr-4 bears the Phosphothreonine mark. Leu-5 participates in a covalent cross-link: Glycyl lysine isopeptide (Lys-Gly) (interchain with G-Cter in SUMO2). Positions 9–15 (PLERKKR) match the Nuclear localization signal motif. RRM domains follow at residues 21-104 (RKLF…ESGK) and 112-191 (KKLF…LSRQ). Lys-22 participates in a covalent cross-link: Glycyl lysine isopeptide (Lys-Gly) (interchain with G-Cter in SUMO2). Phosphoserine is present on Ser-29. Arg-38 is modified (omega-N-methylarginine). Ser-85 is subject to Phosphoserine. Residue Lys-104 is modified to N6,N6-dimethyllysine; alternate. Lys-104 participates in a covalent cross-link: Glycyl lysine isopeptide (Lys-Gly) (interchain with G-Cter in SUMO2); alternate. Glycyl lysine isopeptide (Lys-Gly) (interchain with G-Cter in SUMO2) cross-links involve residues Lys-112, Lys-120, and Lys-137. Position 140 is a phosphothreonine (Thr-140). The residue at position 149 (Ser-149) is a Phosphoserine. Lys-152 participates in a covalent cross-link: Glycyl lysine isopeptide (Lys-Gly) (interchain with G-Cter in SUMO2). Thr-159 is subject to Phosphothreonine. Residues Lys-168 and Lys-173 each participate in a glycyl lysine isopeptide (Lys-Gly) (interchain with G-Cter in SUMO2); alternate cross-link. Lys-168 and Lys-173 each carry N6-acetyllysine; alternate. Thr-176 bears the Phosphothreonine mark. Lys-186 is covalently cross-linked (Glycyl lysine isopeptide (Lys-Gly) (interchain with G-Cter in SUMO2)). Phosphoserine is present on residues Ser-189 and Ser-201. Residues 193 to 353 (MQEVQSSRSG…SGGYGGRSRY (161 aa)) are disordered. Over residues 202–223 (GRGGNFGFGDSRGGGGNFGPGP) the composition is skewed to gly residues. At Arg-203 the chain carries Asymmetric dimethylarginine; alternate. Arg-203 carries the dimethylated arginine; alternate modification. Arg-203 bears the Omega-N-methylarginine; alternate mark. The residue at position 212 (Ser-212) is a Phosphoserine. Residue Arg-213 is modified to Asymmetric dimethylarginine; alternate. Residue Arg-213 is modified to Dimethylated arginine; alternate. Omega-N-methylarginine; alternate is present on Arg-213. Ser-225 carries the phosphoserine modification. An Omega-N-methylarginine modification is found at Arg-228. Ser-231 and Ser-236 each carry phosphoserine. Position 238 is an omega-N-methylarginine (Arg-238). Ser-259 is subject to Phosphoserine. Residue Arg-266 is modified to Asymmetric dimethylarginine; alternate. Omega-N-methylarginine; alternate is present on Arg-266. The interval 308–347 (QQPSNYGPMKSGNFGGSRNMGGPYGGGNYGPGGSGGSGGY) is nuclear targeting sequence. Positions 320–353 (NFGGSRNMGGPYGGGNYGPGGSGGSGGYGGRSRY) are enriched in gly residues. Phosphoserine is present on Ser-324. Omega-N-methylarginine is present on Arg-325. Tyr-331 is modified (phosphotyrosine). Ser-341 and Ser-344 each carry phosphoserine. Tyr-347 carries the phosphotyrosine modification. At Arg-350 the chain carries Omega-N-methylarginine.

As to quaternary structure, homodimer; dimerization is required for nucleocytoplasmic translocation. Identified in the spliceosome C complex. Identified in a IGF2BP1-dependent mRNP granule complex containing untranslated mRNAs. Interacts with IGF2BP1. Interacts with C9orf72. Interacts with DGCR8. Interacts with TARDBP. Interacts with CKAP5. Interacts with TBK1. Interacts with STING1. Interacts with SRC. Interacts with PPIA/CYPA. Interacts (via C-terminus) with FAM76B; the interaction results in retention of HNRNPA2B1 in the nucleus and inhibition of the NF-kappa-B-mediated inflammatory pathway. Interacts with NF-kappa-B inhibitors NFKBIA and NFKBIE; the interaction may be mediated by the RRM2 domain of HNRNPA2B1, and HNRNPA2B1 may interact simultaneously with FAM76B and either NFKBIA or NFKBIE to form a complex. In terms of processing, sumoylated in exosomes, promoting miRNAs-binding. Asymmetric dimethylation at Arg-266 constitutes the major methylation site. According to a report, methylation affects subcellular location and promotes nuclear localization. According to another report, methylation at Arg-266 does not influence nucleocytoplasmic shuttling.

Its subcellular location is the nucleus. The protein resides in the nucleoplasm. The protein localises to the cytoplasm. It is found in the cytoplasmic granule. It localises to the secreted. Its subcellular location is the extracellular exosome. Functionally, heterogeneous nuclear ribonucleoprotein (hnRNP) that associates with nascent pre-mRNAs, packaging them into hnRNP particles. The hnRNP particle arrangement on nascent hnRNA is non-random and sequence-dependent and serves to condense and stabilize the transcripts and minimize tangling and knotting. Packaging plays a role in various processes such as transcription, pre-mRNA processing, RNA nuclear export, subcellular location, mRNA translation and stability of mature mRNAs. Forms hnRNP particles with at least 20 other different hnRNP and heterogeneous nuclear RNA in the nucleus. Involved in transport of specific mRNAs to the cytoplasm in oligodendrocytes and neurons: acts by specifically recognizing and binding the A2RE (21 nucleotide hnRNP A2 response element) or the A2RE11 (derivative 11 nucleotide oligonucleotide) sequence motifs present on some mRNAs, and promotes their transport to the cytoplasm. Specifically binds single-stranded telomeric DNA sequences, protecting telomeric DNA repeat against endonuclease digestion. Also binds other RNA molecules, such as primary miRNA (pri-miRNAs): acts as a nuclear 'reader' of the N6-methyladenosine (m6A) mark by specifically recognizing and binding a subset of nuclear m6A-containing pri-miRNAs. Binding to m6A-containing pri-miRNAs promotes pri-miRNA processing by enhancing binding of DGCR8 to pri-miRNA transcripts. Involved in miRNA sorting into exosomes following sumoylation, possibly by binding (m6A)-containing pre-miRNAs. Acts as a regulator of efficiency of mRNA splicing, possibly by binding to m6A-containing pre-mRNAs. Plays a role in the splicing of pyruvate kinase PKM by binding repressively to sequences flanking PKM exon 9, inhibiting exon 9 inclusion and resulting in exon 10 inclusion and production of the PKM M2 isoform. Also plays a role in the activation of the innate immune response. Mechanistically, senses the presence of viral DNA in the nucleus, homodimerizes and is demethylated by JMJD6. In turn, translocates to the cytoplasm where it activates the TBK1-IRF3 pathway, leading to interferon alpha/beta production. In terms of biological role, (Microbial infection) Involved in the transport of HIV-1 genomic RNA out of the nucleus, to the microtubule organizing center (MTOC), and then from the MTOC to the cytoplasm: acts by specifically recognizing and binding the A2RE (21 nucleotide hnRNP A2 response element) sequence motifs present on HIV-1 genomic RNA, and promotes its transport. The chain is Heterogeneous nuclear ribonucleoproteins A2/B1 (HNRNPA2B1) from Homo sapiens (Human).